A 158-amino-acid chain; its full sequence is Mitotic-spindle organizing protein 2A (158 aa).

At S34 the chain carries Phosphoserine. Residues 84 to 158 (RLASEPQDPA…PGKSPTQGST (75 aa)) form a disordered region. Positions 112-122 (SAALGGVLALA) are enriched in low complexity. Polar residues predominate over residues 128–140 (EGSSQRMPRQPSA). Phosphoserine is present on S152.

This sequence belongs to the MOZART2 family. In terms of assembly, associates with the gamma-tubulin ring complex (gTuRC) consisting of TUBGCP2, TUBGCP3, TUBGCP4, TUBGCP5 and TUBGCP6 and gamma-tubulin TUBG1 or TUBG2; within the complex, interacts with TUBGCP2; the interaction plays a role in gTuRC activation.

It is found in the cytoplasm. It localises to the cytoskeleton. Its subcellular location is the microtubule organizing center. The protein resides in the centrosome. The protein localises to the spindle. Its function is as follows. Required for the recruitment and the assembly of the gamma-tubulin ring complex (gTuRC) at the centrosome. The gTuRC regulates the minus-end nucleation of alpha-beta tubulin heterodimers that grow into microtubule protafilaments, a critical step in centrosome duplication and spindle formation. The protein is Mitotic-spindle organizing protein 2A (MZT2A) of Homo sapiens (Human).